The primary structure comprises 593 residues: Glutamyl-tRNA(Gln) amidotransferase subunit B, mitochondrial (593 aa).

The transit peptide at 1–49 directs the protein to the mitochondrion; sequence MLRPWLRQSTRAARSLPCCQCPRPYSSRLPTLTSPSSSVRRLQTSASES. A compositionally biased stretch (low complexity) spans 27–42; the sequence is SRLPTLTSPSSSVRRL. Residues 27–80 are disordered; that stretch reads SRLPTLTSPSSSVRRLQTSASESQDRVPLRKQLKQNAKALKAEKRQRRESEEAS. Residues 66 to 80 are compositionally biased toward basic and acidic residues; the sequence is LKAEKRQRRESEEAS.

It belongs to the GatB/GatE family. GatB subfamily. Subunit of the heterotrimeric GatCAB amidotransferase (AdT) complex, composed of A, B and C subunits.

It is found in the mitochondrion. It carries out the reaction L-glutamyl-tRNA(Gln) + L-glutamine + ATP + H2O = L-glutaminyl-tRNA(Gln) + L-glutamate + ADP + phosphate + H(+). In terms of biological role, allows the formation of correctly charged Gln-tRNA(Gln) through the transamidation of misacylated Glu-tRNA(Gln) in the mitochondria. The reaction takes place in the presence of glutamine and ATP through an activated gamma-phospho-Glu-tRNA(Gln). The sequence is that of Glutamyl-tRNA(Gln) amidotransferase subunit B, mitochondrial from Aspergillus oryzae (strain ATCC 42149 / RIB 40) (Yellow koji mold).